A 343-amino-acid polypeptide reads, in one-letter code: Isopentenyl-diphosphate delta-isomerase (343 aa).

9-10 lines the substrate pocket; the sequence is RK. Residues S66, 67-69, S98, and N126 contribute to the FMN site; that span reads SMT. Residue 98–100 coordinates substrate; sequence SQR. A substrate-binding site is contributed by Q161. E162 is a Mg(2+) binding site. FMN is bound by residues K193, T223, 273–275, and 294–295; these read GIR and AA.

This sequence belongs to the IPP isomerase type 2 family. In terms of assembly, homooctamer. Dimer of tetramers. The cofactor is FMN. NADPH serves as cofactor. It depends on Mg(2+) as a cofactor.

It localises to the cytoplasm. It catalyses the reaction isopentenyl diphosphate = dimethylallyl diphosphate. In terms of biological role, involved in the biosynthesis of isoprenoids. Catalyzes the 1,3-allylic rearrangement of the homoallylic substrate isopentenyl (IPP) to its allylic isomer, dimethylallyl diphosphate (DMAPP). The chain is Isopentenyl-diphosphate delta-isomerase from Hydrogenovibrio crunogenus (strain DSM 25203 / XCL-2) (Thiomicrospira crunogena).